Here is a 440-residue protein sequence, read N- to C-terminus: Transposon Ty1-OL Gag polyprotein (440 aa).

Composition is skewed to polar residues over residues 1 to 23 (MESQQLSNYPQISHGSACASVTS), 48 to 60 (TKANSQQTTTPAS), and 127 to 152 (QSQFPQYPSSVGTPLSTPSPESGNTF). Disordered stretches follow at residues 1–93 (MESQ…MMTQ), 126–173 (PQSQ…RPPP), and 352–440 (GSRN…PGTY). Residues 153 to 165 (TDSSSADSDMTST) are compositionally biased toward low complexity. The tract at residues 299-401 (NNGIHINNKV…NSKSKTARAH (103 aa)) is RNA-binding. The segment covering 402–418 (NVSTSNNSPSTDNDSIS) has biased composition (low complexity). Ser-416 carries the phosphoserine modification. Positions 419-428 (KSTTEPIQLN) are enriched in polar residues. Residues 429–440 (NKHDLHLRPGTY) show a composition bias toward basic and acidic residues.

In terms of assembly, homotrimer.

The protein resides in the cytoplasm. Capsid protein (CA) is the structural component of the virus-like particle (VLP), forming the shell that encapsulates the retrotransposons dimeric RNA genome. The particles are assembled from trimer-clustered units and there are holes in the capsid shells that allow for the diffusion of macromolecules. CA also has nucleocapsid-like chaperone activity, promoting primer tRNA(i)-Met annealing to the multipartite primer-binding site (PBS), dimerization of Ty1 RNA and initiation of reverse transcription. This is Transposon Ty1-OL Gag polyprotein (TY1A-OL) from Saccharomyces cerevisiae (strain ATCC 204508 / S288c) (Baker's yeast).